A 303-amino-acid polypeptide reads, in one-letter code: Heme A synthase (303 aa).

Topologically, residues 1-8 are cytoplasmic; it reads MFGKKNLK. A helical membrane pass occupies residues 9 to 29; the sequence is WLGVVATLMMTFVQLGGALVT. Residues 30-67 lie on the Extracellular side of the membrane; it reads KTGSADGCGSSWPLCHGALIPEFFPIDTIIELSHRAVS. An intrachain disulfide couples C37 to C44. The active site involves E60. A heme o-binding site is contributed by H63. Residues 68 to 88 traverse the membrane as a helical segment; that stretch reads ALSLLMVLWLVITAWKHIGYI. The Cytoplasmic portion of the chain corresponds to 89-93; the sequence is KEIKP. Residues 94–114 traverse the membrane as a helical segment; the sequence is LSIISVGFLLLQALIGAAAVI. Over 115 to 125 the chain is Extracellular; sequence WQQNDYVLALH. H125 contributes to the heme o binding site. Residues 126–146 form a helical membrane-spanning segment; it reads FGISLISFSSVFLITLIIFSI. At 147–163 the chain is on the cytoplasmic side; sequence DQKYEADELYIKKPLRR. A helical membrane pass occupies residues 164 to 184; it reads LTWLMAIIIYCGVYTGALVRH. At 185–215 the chain is on the extracellular side; sequence ADASLAYGGWPLPFHDLVPHSEQDWVQLTHR. Heme b is bound at residue H214. A helical transmembrane segment spans residues 216 to 236; the sequence is IMAFIVFTIIMITYIHAVKNY. Over 237-244 the chain is Cytoplasmic; the sequence is PNNRTVHY. Residues 245–265 form a helical membrane-spanning segment; the sequence is GYTAAFILVILQVITGALSIM. Topologically, residues 266-270 are extracellular; that stretch reads TNVNL. Residues 271-291 form a helical membrane-spanning segment; that stretch reads LIALFHALFITYLFGMTTYFI. H276 lines the heme b pocket. Topologically, residues 292–303 are cytoplasmic; that stretch reads MLMLRSVRSDKQ.

Belongs to the COX15/CtaA family. Type 1 subfamily. As to quaternary structure, interacts with CtaB. Heme b is required as a cofactor.

The protein localises to the cell membrane. It catalyses the reaction Fe(II)-heme o + 2 A + H2O = Fe(II)-heme a + 2 AH2. The protein operates within porphyrin-containing compound metabolism; heme A biosynthesis; heme A from heme O: step 1/1. In terms of biological role, catalyzes the conversion of heme O to heme A by two successive hydroxylations of the methyl group at C8. The first hydroxylation forms heme I, the second hydroxylation results in an unstable dihydroxymethyl group, which spontaneously dehydrates, resulting in the formyl group of heme A. This Staphylococcus aureus (strain MSSA476) protein is Heme A synthase.